The following is a 249-amino-acid chain: AA9 family lytic polysaccharide monooxygenase cel61B (249 aa).

Residues 1 to 19 (MKSCAILAALGCLAGSVLG) form the signal peptide. Histidine 20 provides a ligand contact to Cu(2+). Asparagine 25 carries N-linked (GlcNAc...) asparagine glycosylation. 2 disulfides stabilise this stretch: cysteine 78-cysteine 198 and cysteine 120-cysteine 124. Histidine 108 contacts Cu(2+). Residues histidine 184 and glutamine 193 each contribute to the O2 site. Tyrosine 195 contacts Cu(2+).

The protein belongs to the polysaccharide monooxygenase AA9 family. As to quaternary structure, monomer. Cu(2+) serves as cofactor.

It is found in the secreted. The catalysed reaction is [(1-&gt;4)-beta-D-glucosyl]n+m + reduced acceptor + O2 = 4-dehydro-beta-D-glucosyl-[(1-&gt;4)-beta-D-glucosyl]n-1 + [(1-&gt;4)-beta-D-glucosyl]m + acceptor + H2O.. Functionally, lytic polysaccharide monooxygenase (LPMO) that depolymerizes crystalline and amorphous polysaccharides via the oxidation of scissile alpha- or beta-(1-4)-glycosidic bonds, yielding C1 or C4 oxidation products. Catalysis by LPMOs requires the reduction of the active-site copper from Cu(II) to Cu(I) by a reducing agent and H(2)O(2) or O(2) as a cosubstrate. The polypeptide is AA9 family lytic polysaccharide monooxygenase cel61B (Hypocrea jecorina (strain QM6a) (Trichoderma reesei)).